The primary structure comprises 162 residues: Protein A49R (162 aa).

The protein belongs to the poxviridae A49 protein family. As to quaternary structure, interacts with host BTRC; this interaction inhibits NF-kappa-B activation.

It localises to the host cytoplasm. The protein resides in the host nucleus. Functionally, plays a role in the inhibition of host NF-kappa-B activation. Interacts with host BTRC and thereby diminishes ubiquitination of NF-kappa-B inhibitor alpha/NFKBIA. This stabilizes NFKBIA and its interaction with NF-kappaB, so retaining p65/RELA in the cytoplasm and preventing NF-kappa-B-dependent gene expression. The chain is Protein A49R from Bos taurus (Bovine).